The chain runs to 428 residues: CRS2-associated factor 1, mitochondrial (428 aa).

The transit peptide at 1–21 (MLLLAGLLRRARPPRRPSVRR) directs the protein to the mitochondrion. 2 disordered regions span residues 33 to 100 (PPAS…REPK) and 129 to 152 (HADDPAPAAERELEEARRRERERV). 2 consecutive CRM domains span residues 155–253 (EPLT…KRPV) and 275–371 (EGLT…IQDN). Residues 378–428 (SVLEEESAGAESENGDQEQASSDWASDECSQLSSSDEMPDDKSAISEADSD) are disordered. A compositionally biased stretch (acidic residues) spans 380–393 (LEEESAGAESENGD). Residues 394–413 (QEQASSDWASDECSQLSSSD) are compositionally biased toward polar residues.

Part of large ribonucleo-protein complexes that include group IIB introns.

It localises to the mitochondrion. Its function is as follows. May be involved in the splicing of group IIB introns in mitochondria. This is CRS2-associated factor 1, mitochondrial from Oryza sativa subsp. japonica (Rice).